We begin with the raw amino-acid sequence, 558 residues long: AP2-like ethylene-responsive transcription factor AIL5 (558 aa).

Low complexity predominate over residues 1–54; sequence MKNNNNKSSSSSSYDSSLSPSSSSSSHQNWLSFSLSNNNNNFNSSSNPNLTSST. 3 disordered regions span residues 1–65, 74–93, and 166–195; these read MKNN…PSHL, SPVE…ATAV, and HSSE…KNVE. DNA-binding regions (AP2/ERF) lie at residues 203 to 269 and 305 to 363; these read IYRG…TNFP and MYRG…TNFD. The segment at 387-406 is disordered; that stretch reads SPATAAADKTVDLSPSDSPS.

It belongs to the AP2/ERF transcription factor family. AP2 subfamily. As to expression, expressed in roots, seedlings, inflorescence, and siliques. Also detected at low levels in leaves.

Its subcellular location is the nucleus. Functionally, probably acts as a transcriptional activator. Binds to the GCC-box pathogenesis-related promoter element. May be involved in the regulation of gene expression by stress factors and by components of stress signal transduction pathways. Involved in the regulation of floral organs size. The protein is AP2-like ethylene-responsive transcription factor AIL5 of Arabidopsis thaliana (Mouse-ear cress).